Here is an 814-residue protein sequence, read N- to C-terminus: Kexin (814 aa).

Positions 1 to 19 (MKVRKYITLCFWWAFSTSA) are cleaved as a signal peptide. A propeptide spanning residues 20-109 (LVSSQQIPLK…LFPRNDLFKR (90 aa)) is cleaved from the precursor. N-linked (GlcNAc...) asparagine glycosylation is present at N42. The propeptide at 110–113 (LPVP) is removed by dipeptidylpeptidase STE13. Residues 114–678 (APPMDSSLLP…KLSSPRQAMH (565 aa)) are Lumenal-facing. A Ca(2+)-binding site is contributed by D135. Residues 141–453 (QWHLVNPSFP…FGKIDAHKLI (313 aa)) form the Peptidase S8 domain. N163 carries an N-linked (GlcNAc...) asparagine glycan. The active-site Charge relay system is the D175. Ca(2+) is bound at residue D184. The active-site Charge relay system is the H213. Ca(2+) is bound by residues N227, D277, D320, and E350. 2 disulfide bridges follow: C230–C377 and C322–C352. The active-site Charge relay system is S385. 2 N-linked (GlcNAc...) asparagine glycosylation sites follow: N404 and N480. Residues 462–596 (VNAQTWFYLP…RLKLFGESID (135 aa)) form the P/Homo B domain. The segment at 651–671 (PQTTTASTDPDSDPNTPKKLS) is disordered. The segment covering 653-667 (TTTASTDPDSDPNTP) has biased composition (low complexity). Residues 679–699 (YFLTIFLIGATFLVLYFMFFM) form a helical membrane-spanning segment. At 700–814 (KSRRRIRRSR…PDVPPSSGRS (115 aa)) the chain is on the cytoplasmic side. The segment at 756 to 814 (SLSSSENGDAEHTIDSVLTNENPFSDPIKQKFPNDANAESASNKLQELQPDVPPSSGRS) is disordered. A compositionally biased stretch (polar residues) spans 792-801 (NAESASNKLQ).

It belongs to the peptidase S8 family. Furin subfamily. Ca(2+) serves as cofactor. O-glycosylated.

Its subcellular location is the golgi apparatus. It localises to the trans-Golgi network membrane. The catalysed reaction is Cleavage of -Lys-Arg-|-Xaa- and -Arg-Arg-|-Xaa- bonds to process yeast alpha-factor pheromone and killer toxin precursors.. In terms of biological role, processing of precursors of alpha-factors and killer toxin. This is Kexin (KEX2) from Saccharomyces cerevisiae (strain ATCC 204508 / S288c) (Baker's yeast).